Consider the following 212-residue polypeptide: Pyridoxine/pyridoxamine 5'-phosphate oxidase (212 aa).

Substrate contacts are provided by residues 8–11 (RKNY) and Lys-66. Residues 61–66 (RIVLIK), 76–77 (FT), Arg-82, Lys-83, and Gln-105 each bind FMN. Positions 123, 127, and 131 each coordinate substrate. FMN is bound by residues 140–141 (QS) and Trp-184. 190–192 (RLH) lines the substrate pocket. Arg-194 provides a ligand contact to FMN.

This sequence belongs to the pyridoxamine 5'-phosphate oxidase family. Homodimer. Requires FMN as cofactor.

The enzyme catalyses pyridoxamine 5'-phosphate + O2 + H2O = pyridoxal 5'-phosphate + H2O2 + NH4(+). The catalysed reaction is pyridoxine 5'-phosphate + O2 = pyridoxal 5'-phosphate + H2O2. It participates in cofactor metabolism; pyridoxal 5'-phosphate salvage; pyridoxal 5'-phosphate from pyridoxamine 5'-phosphate: step 1/1. The protein operates within cofactor metabolism; pyridoxal 5'-phosphate salvage; pyridoxal 5'-phosphate from pyridoxine 5'-phosphate: step 1/1. Functionally, catalyzes the oxidation of either pyridoxine 5'-phosphate (PNP) or pyridoxamine 5'-phosphate (PMP) into pyridoxal 5'-phosphate (PLP). This Paraburkholderia phymatum (strain DSM 17167 / CIP 108236 / LMG 21445 / STM815) (Burkholderia phymatum) protein is Pyridoxine/pyridoxamine 5'-phosphate oxidase.